The chain runs to 228 residues: N-acetyltransferase family 8 member 3 (228 aa).

Transmembrane regions (helical) follow at residues 36–56 (MLLLPGTLLILLGVPLTLFLA) and 58–78 (GSWLLVLLSTLTLLVSLWLLA). Positions 61 to 217 (LLVLLSTLTL…RNSPMICLKY (157 aa)) constitute an N-acetyltransferase domain.

The protein belongs to the camello family.

Its subcellular location is the nucleus membrane. It localises to the cytoplasm. The protein localises to the perinuclear region. The catalysed reaction is L-lysyl-[protein] + acetyl-CoA = N(6)-acetyl-L-lysyl-[protein] + CoA + H(+). Functionally, has histone acetyltransferase activity in vitro, with specificity for histone H4. This chain is N-acetyltransferase family 8 member 3, found in Rattus norvegicus (Rat).